The sequence spans 193 residues: Ion-translocating oxidoreductase complex subunit B (193 aa).

The hydrophobic stretch occupies residues 1-23 (MTFLFIVITLLALIFGAILGFAS). One can recognise a 4Fe-4S domain in the interval 29-87 (EADPVVEKIDAILPQSQCGQCGYPGCKPYAEAICNGDEITKCIPGGQTTIVKIAEILGV). Residues C46, C49, C54, C70, C110, C113, C116, C120, C140, C143, C146, and C150 each coordinate [4Fe-4S] cluster. 4Fe-4S ferredoxin-type domains lie at 101–130 (KVAFIDENMCIGCTKCIQACPVDAIIGTNK) and 131–160 (AMHTIIPDLCTGCELCVAPCPTDCILMIPV).

Belongs to the 4Fe4S bacterial-type ferredoxin family. RnfB subfamily. As to quaternary structure, the complex is composed of six subunits: RnfA, RnfB, RnfC, RnfD, RnfE and RnfG. The cofactor is [4Fe-4S] cluster.

The protein localises to the cell inner membrane. Functionally, part of a membrane-bound complex that couples electron transfer with translocation of ions across the membrane. This is Ion-translocating oxidoreductase complex subunit B from Haemophilus influenzae (strain 86-028NP).